The chain runs to 160 residues: Cyclic pyranopterin monophosphate synthase (160 aa).

Substrate is bound by residues Met-77–His-79 and Met-114–Glu-115. Asp-129 is an active-site residue.

The protein belongs to the MoaC family. Homohexamer; trimer of dimers.

It carries out the reaction (8S)-3',8-cyclo-7,8-dihydroguanosine 5'-triphosphate = cyclic pyranopterin phosphate + diphosphate. Its pathway is cofactor biosynthesis; molybdopterin biosynthesis. Its function is as follows. Catalyzes the conversion of (8S)-3',8-cyclo-7,8-dihydroguanosine 5'-triphosphate to cyclic pyranopterin monophosphate (cPMP). In Listeria welshimeri serovar 6b (strain ATCC 35897 / DSM 20650 / CCUG 15529 / CIP 8149 / NCTC 11857 / SLCC 5334 / V8), this protein is Cyclic pyranopterin monophosphate synthase.